We begin with the raw amino-acid sequence, 463 residues long: L-seryl-tRNA(Sec) selenium transferase (463 aa).

Lys-295 carries the N6-(pyridoxal phosphate)lysine modification.

Belongs to the SelA family. As to quaternary structure, homodecamer; pentamer of dimers. Binds only one seryl-tRNA(Sec) per dimer. The cofactor is pyridoxal 5'-phosphate.

Its subcellular location is the cytoplasm. The catalysed reaction is L-seryl-tRNA(Sec) + selenophosphate + H(+) = L-selenocysteinyl-tRNA(Sec) + phosphate. It functions in the pathway aminoacyl-tRNA biosynthesis; selenocysteinyl-tRNA(Sec) biosynthesis; selenocysteinyl-tRNA(Sec) from L-seryl-tRNA(Sec) (bacterial route): step 1/1. Functionally, converts seryl-tRNA(Sec) to selenocysteinyl-tRNA(Sec) required for selenoprotein biosynthesis. This is L-seryl-tRNA(Sec) selenium transferase from Escherichia coli O139:H28 (strain E24377A / ETEC).